The primary structure comprises 180 residues: ATP-dependent protease subunit HslV (180 aa).

Threonine 8 is an active-site residue. Na(+) is bound by residues serine 165, cysteine 168, and threonine 171.

The protein belongs to the peptidase T1B family. HslV subfamily. In terms of assembly, a double ring-shaped homohexamer of HslV is capped on each side by a ring-shaped HslU homohexamer. The assembly of the HslU/HslV complex is dependent on binding of ATP.

The protein resides in the cytoplasm. It catalyses the reaction ATP-dependent cleavage of peptide bonds with broad specificity.. Allosterically activated by HslU binding. In terms of biological role, protease subunit of a proteasome-like degradation complex believed to be a general protein degrading machinery. The chain is ATP-dependent protease subunit HslV from Staphylococcus saprophyticus subsp. saprophyticus (strain ATCC 15305 / DSM 20229 / NCIMB 8711 / NCTC 7292 / S-41).